A 457-amino-acid polypeptide reads, in one-letter code: BAG family molecular chaperone regulator 4 (457 aa).

Over residues 1–20 (MSALRRSGYGPSDGPSYGRY) the composition is skewed to low complexity. Positions 1–104 (MSALRRSGYG…PYPGYNSNYW (104 aa)) are disordered. At serine 7 the chain carries Phosphoserine. A compositionally biased stretch (pro residues) spans 31 to 48 (HVPPPLYPPLRPEPPQPP). 4 positions are modified to omega-N-methylarginine: arginine 41, arginine 54, arginine 108, and arginine 185. Disordered stretches follow at residues 128–335 (LNSY…SDLL) and 348–374 (YGNA…SSDE). Polar residues predominate over residues 160–193 (YTQSNYSTEVPNTYRSPGNSPTPMSRWMYSQQDC). Low complexity predominate over residues 255 to 268 (PWPSAAPSAPSAGS). Residues 284–295 (PQPPPSPPPQQP) are compositionally biased toward pro residues. 2 stretches are compositionally biased toward polar residues: residues 326 to 335 (AVNNDNSDLL) and 348 to 365 (YGNA…SNNL). One can recognise a BAG domain in the interval 379–456 (SIKKIIHVLE…AILEKLEKKG (78 aa)).

Binds to the ATPase domain of HSP/HSC70 chaperones. Binds to the death domain of TNFRSF12. Binds to the death domain of TNFRSF1A in the absence of TNF and thereby prevents binding of adapter molecules such as TRADD or TRAF2. Interacts with PRKN.

The protein localises to the cytoplasm. In terms of biological role, inhibits the chaperone activity of HSP70/HSC70 by promoting substrate release. Prevents constitutive TNFRSF1A signaling. Negative regulator of PRKN translocation to damaged mitochondria. In Mus musculus (Mouse), this protein is BAG family molecular chaperone regulator 4 (Bag4).